Consider the following 702-residue polypeptide: Protein crooked neck (702 aa).

13 HAT repeats span residues 56-88 (DYQQ…WEEQ), 90-122 (QEIQ…MEMK), 124-156 (KQVN…MEEM), 158-189 (ENVA…FELR), 191-222 (KEID…FEES), 224-259 (GFIH…FEEG), 261-295 (KEHD…HEKK), 305-337 (VIVS…LIEA), 339-373 (GDRD…LWIN), 383-419 (EDAE…FEIR), 454-486 (REFE…LENL), 488-522 (GDTD…FEVA), and 524-555 (GETE…FEMG). Residues 620 to 628 (PRRIKKRQK) carry the Nuclear localization signal motif. The segment at 670–702 (KDNTVDDPPATAIASEPEPAADAAPADTTDSGD) is disordered. Residues 683 to 702 (ASEPEPAADAAPADTTDSGD) are compositionally biased toward low complexity.

It belongs to the crooked-neck family. Colocalizes with a complex containing snRNP proteins. Transcribed in all cells during embryonic development.

It is found in the nucleus speckle. May be involved in pre-mRNA splicing process. Involved in embryonic neurogenesis and cell rearrangement during Malpighian tubule morphogenesis. This chain is Protein crooked neck (crn), found in Drosophila melanogaster (Fruit fly).